Consider the following 418-residue polypeptide: MIHSLFLMNGGGAVFLEKHWRSVVSRSVCAYLLEAQLKAGQPENVAPVLATPHHYLVSTHRHGISFVAVIQAEVPPLFVIEFLHRVAETLQDYFGECSEASIKDNVVIVYELLEEMLDNGFPLATESNILKELIKPPTILRSVVNSITGSSNVGDQLPTGQLSNIPWRRVGVKYTNNEAYFDVTEEIDAIIDKSGSTVFAEIQGVIDACIKLTGMPDLTLSFLNPRLLDDVSFHPCVRFKRWESERVLSFIPPVGNFRLMSYHVNSQNLVAIPVYVKHNINFRDDGSTGWFDITIGPKQTMGKVVENILVIIHMPKVVLNMTLTAAQGNFTFDPVTKVLIWDIGKIILPKLPTLKGLINLQSGEAKPEENPTLNIQFRIQQLAVSGLKVNRLDMYGERYKPFKGVKYVTKAGKFQVRT.

The MHD domain occupies 176 to 417 (NNEAYFDVTE…VTKAGKFQVR (242 aa)).

The protein belongs to the adaptor complexes medium subunit family. Adaptor protein complex 1 (AP-1) is a heterotetramer composed of two large adaptins (gamma- and beta'-type subunits), a medium adaptin (mu-type subunit AP47) and a small adaptin (sigma-type subunit AP19). Post-translationally, regulated by phosphorylation.

Its subcellular location is the golgi apparatus. It is found in the cytoplasmic vesicle. The protein resides in the clathrin-coated vesicle membrane. Its function is as follows. Component of the adapter complexes which link clathrin to receptors in coated vesicles. Clathrin-associated protein complexes are believed to interact with the cytoplasmic tails of membrane proteins, leading to their selection and concentration. AP47 is a subunit of the plasma membrane adapter. This is AP-1 complex subunit mu from Diplobatis ommata (Ocellated electric ray).